The primary structure comprises 504 residues: Fumitremorgin C monooxygenase (504 aa).

Residues 9-29 traverse the membrane as a helical segment; that stretch reads LPYPGVVGASLLVILGIILLF. Position 442 (C442) interacts with heme.

This sequence belongs to the cytochrome P450 family. It depends on heme as a cofactor.

It is found in the membrane. It catalyses the reaction fumitremorgin C + 2 reduced [NADPH--hemoprotein reductase] + 2 O2 = 12alpha,13alpha-dihydroxyfumitremorgin C + 2 oxidized [NADPH--hemoprotein reductase] + 2 H2O + 2 H(+). It participates in mycotoxin biosynthesis. Functionally, cytochrome P450 monooxygenase; part of the gene cluster that mediates the biosynthesis of fumitremorgins, indole alkaloids that carry not only intriguing chemical structures, but also interesting biological and pharmacological activities. The biosynthesis of fumitremorgin-type alkaloids begins by condensation of the two amino acids L-tryptophan and L-proline to brevianamide F, catalyzed by the non-ribosomal peptide synthetase ftmPS/ftmA. Brevianamide F is then prenylated by the prenyltransferase ftmPT1/ftmB in the presence of dimethylallyl diphosphate, resulting in the formation of tryprostatin B. The three cytochrome P450 monooxygenases, ftmP450-1/ftmC, ftmP450-2/ftmE and ftmP450-3/FtmG, are responsible for the conversion of tryprostatin B to 6-hydroxytryprostatin B, tryprostatin A to fumitremorgin C and fumitremorgin C to 12,13-dihydroxyfumitremorgin C, respectively. The putative methyltransferase ftmMT/ftmD is expected for the conversion of 6-hydroxytryprostatin B to tryprostatin A. FtmPT2/FtmH catalyzes the prenylation of 12,13-dihydroxyfumitre-morgin C in the presence of dimethylallyl diphosphate, resulting in the formation of fumitremorgin B. Fumitremorgin B is further converted to verruculogen by ftmOx1/ftmF via the insertion of an endoperoxide bond between the two prenyl moieties. Finally, verruculogen is further converted to fumitremorgin A by the verruculogen prenyltransferase ftmPT3. The polypeptide is Fumitremorgin C monooxygenase (Neosartorya fischeri (strain ATCC 1020 / DSM 3700 / CBS 544.65 / FGSC A1164 / JCM 1740 / NRRL 181 / WB 181) (Aspergillus fischerianus)).